We begin with the raw amino-acid sequence, 236 residues long: Small ribosomal subunit protein uS3 (236 aa).

Residues 39–107 (IREFLTEELK…DTSLNIVEVR (69 aa)) enclose the KH type-2 domain. A disordered region spans residues 214-236 (ASERRAVEGDNQGSSSNRRRENA).

Belongs to the universal ribosomal protein uS3 family. In terms of assembly, part of the 30S ribosomal subunit. Forms a tight complex with proteins S10 and S14.

Functionally, binds the lower part of the 30S subunit head. Binds mRNA in the 70S ribosome, positioning it for translation. In Brucella abortus (strain S19), this protein is Small ribosomal subunit protein uS3.